Reading from the N-terminus, the 246-residue chain is E3 ubiquitin-protein ligase MARCHF2 (246 aa).

The RING-CH-type zinc-finger motif lies at glycine 56–glutamate 116. Residues cysteine 64, cysteine 67, cysteine 80, cysteine 82, histidine 90, cysteine 93, cysteine 106, and cysteine 109 each coordinate Zn(2+). Transmembrane regions (helical) follow at residues leucine 138–leucine 158 and alanine 175–valine 195.

It localises to the endoplasmic reticulum membrane. The protein localises to the lysosome membrane. The protein resides in the endosome membrane. The enzyme catalyses S-ubiquitinyl-[E2 ubiquitin-conjugating enzyme]-L-cysteine + [acceptor protein]-L-lysine = [E2 ubiquitin-conjugating enzyme]-L-cysteine + N(6)-ubiquitinyl-[acceptor protein]-L-lysine.. Its pathway is protein modification; protein ubiquitination. Functionally, E3 ubiquitin-protein ligase which may be involved in endosomal trafficking. E3 ubiquitin ligases accept ubiquitin from an E2 ubiquitin-conjugating enzyme in the form of a thioester and then directly transfer the ubiquitin to targeted substrates. In Xenopus laevis (African clawed frog), this protein is E3 ubiquitin-protein ligase MARCHF2 (marchf2).